The sequence spans 1179 residues: DNA-directed RNA polymerase subunit beta' (1179 aa).

Zn(2+) is bound by residues C60, C62, C75, and C78. Residues D449, D451, and D453 each contribute to the Mg(2+) site. Zn(2+) contacts are provided by C796, C871, C878, and C881.

This sequence belongs to the RNA polymerase beta' chain family. The RNAP catalytic core consists of 2 alpha, 1 beta, 1 beta' and 1 omega subunit. When a sigma factor is associated with the core the holoenzyme is formed, which can initiate transcription. Mg(2+) is required as a cofactor. The cofactor is Zn(2+).

The enzyme catalyses RNA(n) + a ribonucleoside 5'-triphosphate = RNA(n+1) + diphosphate. In terms of biological role, DNA-dependent RNA polymerase catalyzes the transcription of DNA into RNA using the four ribonucleoside triphosphates as substrates. This Symbiobacterium thermophilum (strain DSM 24528 / JCM 14929 / IAM 14863 / T) protein is DNA-directed RNA polymerase subunit beta'.